The chain runs to 384 residues: DNA dC-&gt;dU-editing enzyme APOBEC-3G (384 aa).

An essential for cytoplasmic localization region spans residues 1-60 (MKPHFRNPVERMYQDTFSDNFYNRPILSRRNTVWLCYEVKTKGPSRPPLDAKIFRGQVYS). 2 consecutive CMP/dCMP-type deaminase domains span residues 29–138 (RRNT…LRSL) and 214–328 (GRHE…LRTL). Position 32 is a phosphothreonine; by PKA (Thr-32). His-65, Cys-97, and Cys-100 together coordinate Zn(2+). The tract at residues 209-336 (ELWVRGRHET…TLAKAGAEIS (128 aa)) is necessary for homooligomerization. The interaction with DNA stretch occupies residues 213 to 215 (RGR). Thr-218 bears the Phosphothreonine; by PKA and CAMK2 mark. A Zn(2+)-binding site is contributed by His-257. Catalysis depends on Glu-259, which acts as the Proton donor. Residues Cys-288 and Cys-291 each coordinate Zn(2+). The interval 313-320 (RIYDDQGR) is interaction with DNA.

The protein belongs to the cytidine and deoxycytidylate deaminase family. Homodimer. Homooligomer. Can bind RNA to form ribonucleoprotein complexes of high-molecular-mass (HMM) or low-molecular-mass (LMM). HMM is inactive and heterogeneous in protein composition because of binding nonselectively to cellular RNAs, which in turn are associated with variety of cellular proteins. The LMM form which is enzymatically active has few or no RNAs associated. Its ability to form homooligomer is distinct from its ability to assemble into HMM. Interacts with APOBEC3B, APOBEC3F, MOV10, AGO2, EIF4E, EIF4ENIF1, DCP2 and DDX6 in an RNA-dependent manner. Interacts with AGO1, AGO3 and PKA/PRKACA. Requires Zn(2+) as cofactor.

The protein resides in the cytoplasm. It localises to the nucleus. The protein localises to the P-body. The enzyme catalyses a 2'-deoxycytidine in single-stranded DNA + H2O + H(+) = a 2'-deoxyuridine in single-stranded DNA + NH4(+). Its function is as follows. DNA deaminase (cytidine deaminase) which acts as an inhibitor of retrovirus replication and retrotransposon mobility via deaminase-dependent and -independent mechanisms. After the penetration of retroviral nucleocapsids into target cells of infection and the initiation of reverse transcription, it can induce the conversion of cytosine to uracil in the minus-sense single-strand viral DNA, leading to G-to-A hypermutations in the subsequent plus-strand viral DNA. The resultant detrimental levels of mutations in the proviral genome, along with a deamination-independent mechanism that works prior to the proviral integration, together exert efficient antiretroviral effects in infected target cells. Selectively targets single-stranded DNA and does not deaminate double-stranded DNA or single- or double-stranded RNA. May inhibit the mobility of LTR retrotransposons. The polypeptide is DNA dC-&gt;dU-editing enzyme APOBEC-3G (APOBEC3G) (Pan paniscus (Pygmy chimpanzee)).